The chain runs to 113 residues: Nucleoid-associated protein PMT_0025 (113 aa).

Belongs to the YbaB/EbfC family. In terms of assembly, homodimer.

It localises to the cytoplasm. The protein localises to the nucleoid. Its function is as follows. Binds to DNA and alters its conformation. May be involved in regulation of gene expression, nucleoid organization and DNA protection. In Prochlorococcus marinus (strain MIT 9313), this protein is Nucleoid-associated protein PMT_0025.